Consider the following 481-residue polypeptide: ATP synthase subunit beta, chloroplastic (481 aa).

162–169 lines the ATP pocket; sequence GGAGVGKT.

Belongs to the ATPase alpha/beta chains family. In terms of assembly, F-type ATPases have 2 components, F(1) - the catalytic core - and F(0) - the membrane proton channel. F(1) has five subunits: alpha(3), beta(3), gamma(1), delta(1), epsilon(1). F(0) has four main subunits: a(1), b(1), b'(1) and c(10-14). The alpha and beta chains form an alternating ring which encloses part of the gamma chain. F(1) is attached to F(0) by a central stalk formed by the gamma and epsilon chains, while a peripheral stalk is formed by the delta, b and b' chains.

It localises to the plastid. Its subcellular location is the chloroplast thylakoid membrane. The catalysed reaction is ATP + H2O + 4 H(+)(in) = ADP + phosphate + 5 H(+)(out). Functionally, f(1)F(0) ATP synthase produces ATP from ADP in the presence of a proton or sodium gradient. F-type ATPases consist of two structural domains, F(1) containing the extramembraneous catalytic core and F(0) containing the membrane proton channel, linked together by a central stalk and a peripheral stalk. During catalysis, ATP synthesis in the catalytic domain of F(1) is coupled via a rotary mechanism of the central stalk subunits to proton translocation. Produces ATP from ADP in the presence of a proton gradient across the membrane. The catalytic sites are hosted primarily by the beta subunits. This is ATP synthase subunit beta, chloroplastic from Chlamydomonas reinhardtii (Chlamydomonas smithii).